We begin with the raw amino-acid sequence, 93 residues long: Phosphoribosyl-ATP pyrophosphatase (93 aa).

It belongs to the PRA-PH family.

It localises to the cytoplasm. The enzyme catalyses 1-(5-phospho-beta-D-ribosyl)-ATP + H2O = 1-(5-phospho-beta-D-ribosyl)-5'-AMP + diphosphate + H(+). It participates in amino-acid biosynthesis; L-histidine biosynthesis; L-histidine from 5-phospho-alpha-D-ribose 1-diphosphate: step 2/9. The sequence is that of Phosphoribosyl-ATP pyrophosphatase from Rhodococcus jostii (strain RHA1).